The chain runs to 111 residues: Cytochrome b-c1 complex subunit 7 (111 aa).

An N-acetylalanine modification is found at Ala-2. Lys-19 carries the post-translational modification N6-acetyllysine. Lys-78 is modified (N6-acetyllysine; alternate). The residue at position 78 (Lys-78) is an N6-succinyllysine; alternate. Residue Lys-83 is modified to N6-acetyllysine. At Lys-88 the chain carries N6-acetyllysine; alternate. Lys-88 bears the N6-succinyllysine; alternate mark. An N6-acetyllysine modification is found at Lys-96.

The protein belongs to the UQCRB/QCR7 family. As to quaternary structure, component of the ubiquinol-cytochrome c oxidoreductase (cytochrome b-c1 complex, complex III, CIII), a multisubunit enzyme composed of 11 subunits. The complex is composed of 3 respiratory subunits cytochrome b, cytochrome c1 and Rieske protein UQCRFS1, 2 core protein subunits UQCRC1/QCR1 and UQCRC2/QCR2, and 6 low-molecular weight protein subunits UQCRH/QCR6, UQCRB/QCR7, UQCRQ/QCR8, UQCR10/QCR9, UQCR11/QCR10 and subunit 9, the cleavage product of Rieske protein UQCRFS1. The complex exists as an obligatory dimer and forms supercomplexes (SCs) in the inner mitochondrial membrane with NADH-ubiquinone oxidoreductase (complex I, CI) and cytochrome c oxidase (complex IV, CIV), resulting in different assemblies (supercomplex SCI(1)III(2)IV(1) and megacomplex MCI(2)III(2)IV(2)).

It is found in the mitochondrion inner membrane. Its function is as follows. Component of the ubiquinol-cytochrome c oxidoreductase, a multisubunit transmembrane complex that is part of the mitochondrial electron transport chain which drives oxidative phosphorylation. The respiratory chain contains 3 multisubunit complexes succinate dehydrogenase (complex II, CII), ubiquinol-cytochrome c oxidoreductase (cytochrome b-c1 complex, complex III, CIII) and cytochrome c oxidase (complex IV, CIV), that cooperate to transfer electrons derived from NADH and succinate to molecular oxygen, creating an electrochemical gradient over the inner membrane that drives transmembrane transport and the ATP synthase. The cytochrome b-c1 complex catalyzes electron transfer from ubiquinol to cytochrome c, linking this redox reaction to translocation of protons across the mitochondrial inner membrane, with protons being carried across the membrane as hydrogens on the quinol. In the process called Q cycle, 2 protons are consumed from the matrix, 4 protons are released into the intermembrane space and 2 electrons are passed to cytochrome c. The polypeptide is Cytochrome b-c1 complex subunit 7 (UQCRB) (Bos taurus (Bovine)).